The primary structure comprises 491 residues: MATFKDACYHYKKLNKLNSLVLKLGANDEWRPAPVTKYKGWCLDCCQYTNLTYCRGCALYHVCQWCSQYNRCFLDEEPHLLRMRTFKDVVTKEDIEGLLTMYETLFPINEKLVNKFINFVKQRKCRNEYLLEWYNHLLMPITLQALTINLEDSAYYIFGYYDCMECENQTPFQFVNLLEKYDKLLLDDRNFHRMSHLPAILQQEYALRYFSKSRFLSKGKKRLSRHDFSDNLMEDRHSPTSLMQVVRNCISTHMNDCEWNKRCHVIVDAKNYISIMNSSYTEHYSVSQRCKLFTKYKFGIISKLVKPNYIFSNHESYALNVHNCKWCQINNHYKVWEDFRLRKIYNNIMDFIRALVKSNGNVGHCSSQESVYKYIPDIFLICKKEKWNEAVKMLFNYLEPVDINGTEYALLDYEVNWEVRGLVMQNMDGKVPRILNMNDTKKILSAIIFDWFDTRYMRETPMTTSTTNQLRTLNKKNELIDEYDLELSDVE.

The segment at 1–81 (MATFKDACYH…CFLDEEPHLL (81 aa)) is RNA-binding. Residues 42–79 (CLDCCQYTNLTYCRGCALYHVCQWCSQYNRCFLDEEPH) form a zinc-binding domain region. The segment at 82 to 176 (RMRTFKDVVT…ENQTPFQFVN (95 aa)) is important for cytoskeleton localization. The segment at 320–491 (NVHNCKWCQI…EYDLELSDVE (172 aa)) is interaction with host IRF3. The pLxIS motif motif lies at 485–488 (LELS).

It belongs to the rotavirus NSP1 family. As to quaternary structure, interacts (via C-terminus) with host IRF3; this interaction leads to IRF3 degradation. Interacts with host IRF7; this interaction leads to IRF7 degradation. Interacts with host CUL1 and CUL3.

The protein localises to the host cytoplasm. It is found in the host cytoskeleton. In terms of biological role, plays a role in the inhibition of host innate immunity by inducing the degradation of key host factors required to activate interferon production such as IRF3, IRF5 or IRF7. Associates with components of cullin RING ligases (CRLs) including CUL1 or CUL3, which are essential multisubunit ubiquitination complexes, to modulate their activities. The polypeptide is Non-structural protein 1 (Rotavirus A (isolate RVA/Cow/Thailand/A44/1988/G10P8[11]) (RV-A)).